Consider the following 365-residue polypeptide: Spermidine/putrescine import ATP-binding protein PotA (365 aa).

The ABC transporter domain maps to isoleucine 9–isoleucine 239. Glycine 41–threonine 48 is a binding site for ATP.

The protein belongs to the ABC transporter superfamily. Spermidine/putrescine importer (TC 3.A.1.11.1) family. In terms of assembly, the complex is composed of two ATP-binding proteins (PotA), two transmembrane proteins (PotB and PotC) and a solute-binding protein (PotD).

The protein localises to the cell membrane. It catalyses the reaction ATP + H2O + polyamine-[polyamine-binding protein]Side 1 = ADP + phosphate + polyamineSide 2 + [polyamine-binding protein]Side 1.. Part of the ABC transporter complex PotABCD involved in spermidine/putrescine import. Responsible for energy coupling to the transport system. The polypeptide is Spermidine/putrescine import ATP-binding protein PotA (Lactiplantibacillus plantarum (strain ATCC BAA-793 / NCIMB 8826 / WCFS1) (Lactobacillus plantarum)).